A 318-amino-acid chain; its full sequence is Aldo-keto reductase family 1 member C21 (318 aa).

20-24 (GFGTA) serves as a coordination point for NADP(+). Lys-31 is a substrate binding site. Residue Asp-50 coordinates NADP(+). The active-site Proton donor is the Tyr-55. His-117 provides a ligand contact to substrate. NADP(+) is bound by residues 166-167 (SN), Gln-190, 216-224 (YGVLGTQRY), and 270-280 (TSLKEERIKEN).

It belongs to the aldo/keto reductase family. As to quaternary structure, monomer.

The protein resides in the cytoplasm. It carries out the reaction androsterone + NADP(+) = 5alpha-androstan-3,17-dione + NADPH + H(+). It catalyses the reaction androsterone + NAD(+) = 5alpha-androstan-3,17-dione + NADH + H(+). NADP-dependent 17-alpha-hydroxysteroid dehydrogenase that converts 5-alpha-androstane-3,17-dione into androsterone. Has lower 3-alpha-hydroxysteroid dehydrogenase activity. Has broad substrate specificity and acts on various 17-alpha-hydroxysteroids, 17-ketosteroids, 3-alpha hydroxysteroids and 3-ketosteroids. Reduction of keto groups is strictly stereoselective. Reduction of 17-ketosteroids yields only 17-alpha-hydroxysteroids. Likewise, reduction of 3-ketosteroids yields only 3-alpha-hydroxysteroids. The polypeptide is Aldo-keto reductase family 1 member C21 (Akr1c21) (Rattus norvegicus (Rat)).